A 394-amino-acid polypeptide reads, in one-letter code: Nuclear hormone receptor family member nhr-18 (394 aa).

The nuclear receptor DNA-binding region spans 8–83; that stretch reads SGSCEVCGDK…VGMDTRRFQT (76 aa). NR C4-type zinc fingers lie at residues 11 to 31 and 48 to 71; these read CEVC…CRAC and CPNG…LKKC. The NR LBD domain occupies 134-394; the sequence is MLQKPTNHVL…FSHPEMFEAT (261 aa).

It belongs to the nuclear hormone receptor family.

Its subcellular location is the nucleus. Its function is as follows. Orphan nuclear receptor. This Caenorhabditis elegans protein is Nuclear hormone receptor family member nhr-18 (nhr-18).